A 359-amino-acid chain; its full sequence is Cytoplasmic tRNA 2-thiolation protein 1 (359 aa).

The protein belongs to the TtcA family. CTU1/NCS6/ATPBD3 subfamily. Interacts with NCS2 and URM1. May act by forming a heterodimer with NCS2. Component of a large molecular weight complex of more than 250 kDa.

It localises to the cytoplasm. It is found in the mitochondrion. The protein operates within tRNA modification; 5-methoxycarbonylmethyl-2-thiouridine-tRNA biosynthesis. Functionally, plays a central role in 2-thiolation of mcm(5)S(2)U at tRNA wobble positions of tRNA(Lys), tRNA(Glu) and tRNA(Gln). Directly binds tRNAs and probably acts by catalyzing adenylation of tRNAs, an intermediate required for 2-thiolation. It is unclear whether it acts as a sulfurtransferase that transfers sulfur from thiocarboxylated URM1 onto the uridine of tRNAs at wobble position. Prior mcm(5) tRNA modification by the elongator complex is required for 2-thiolation. May also be involved in protein urmylation. May also be involved in protein urmylation and in invasive and pseudohyphal growth. The sequence is that of Cytoplasmic tRNA 2-thiolation protein 1 from Saccharomyces cerevisiae (strain ATCC 204508 / S288c) (Baker's yeast).